A 227-amino-acid polypeptide reads, in one-letter code: Cytochrome c oxidase subunit 2 (227 aa).

At 1–14 the chain is on the mitochondrial intermembrane side; that stretch reads MAYPFQLGLQDATS. The helical transmembrane segment at 15–45 threads the bilayer; that stretch reads PIMEELTNFHDHTLMIVFLISSLVLYIISLM. Over 46 to 59 the chain is Mitochondrial matrix; the sequence is LTTKLTHTSTMDAQ. The chain crosses the membrane as a helical span at residues 60–87; sequence EVETIWTILPAVILILIALPSLRILYMM. At 88 to 227 the chain is on the mitochondrial intermembrane side; the sequence is DEINNPVLTV…YFENWSASMI (140 aa). Residues histidine 161, cysteine 196, glutamate 198, cysteine 200, histidine 204, and methionine 207 each coordinate Cu cation. Glutamate 198 contacts Mg(2+). Residue tyrosine 218 is modified to Phosphotyrosine.

The protein belongs to the cytochrome c oxidase subunit 2 family. As to quaternary structure, component of the cytochrome c oxidase (complex IV, CIV), a multisubunit enzyme composed of 14 subunits. The complex is composed of a catalytic core of 3 subunits MT-CO1, MT-CO2 and MT-CO3, encoded in the mitochondrial DNA, and 11 supernumerary subunits COX4I, COX5A, COX5B, COX6A, COX6B, COX6C, COX7A, COX7B, COX7C, COX8 and NDUFA4, which are encoded in the nuclear genome. The complex exists as a monomer or a dimer and forms supercomplexes (SCs) in the inner mitochondrial membrane with NADH-ubiquinone oxidoreductase (complex I, CI) and ubiquinol-cytochrome c oxidoreductase (cytochrome b-c1 complex, complex III, CIII), resulting in different assemblies (supercomplex SCI(1)III(2)IV(1) and megacomplex MCI(2)III(2)IV(2)). Found in a complex with TMEM177, COA6, COX18, COX20, SCO1 and SCO2. Interacts with TMEM177 in a COX20-dependent manner. Interacts with COX20. Interacts with COX16. Requires Cu cation as cofactor.

Its subcellular location is the mitochondrion inner membrane. It carries out the reaction 4 Fe(II)-[cytochrome c] + O2 + 8 H(+)(in) = 4 Fe(III)-[cytochrome c] + 2 H2O + 4 H(+)(out). Its function is as follows. Component of the cytochrome c oxidase, the last enzyme in the mitochondrial electron transport chain which drives oxidative phosphorylation. The respiratory chain contains 3 multisubunit complexes succinate dehydrogenase (complex II, CII), ubiquinol-cytochrome c oxidoreductase (cytochrome b-c1 complex, complex III, CIII) and cytochrome c oxidase (complex IV, CIV), that cooperate to transfer electrons derived from NADH and succinate to molecular oxygen, creating an electrochemical gradient over the inner membrane that drives transmembrane transport and the ATP synthase. Cytochrome c oxidase is the component of the respiratory chain that catalyzes the reduction of oxygen to water. Electrons originating from reduced cytochrome c in the intermembrane space (IMS) are transferred via the dinuclear copper A center (CU(A)) of subunit 2 and heme A of subunit 1 to the active site in subunit 1, a binuclear center (BNC) formed by heme A3 and copper B (CU(B)). The BNC reduces molecular oxygen to 2 water molecules using 4 electrons from cytochrome c in the IMS and 4 protons from the mitochondrial matrix. The protein is Cytochrome c oxidase subunit 2 (MT-CO2) of Dacnomys millardi (Millard's rat).